The chain runs to 170 residues: CASP-like protein 1F1 (170 aa).

Topologically, residues 1–16 (MMGDNEGRRTPLLNLG) are cytoplasmic. The helical transmembrane segment at 17–37 (VQVSMRVLTIGAAMASMWVMI) threads the bilayer. Over 38 to 62 (TNREVASVYGIAFEAKYSYSSAFRY) the chain is Extracellular. A helical transmembrane segment spans residues 63 to 83 (LVYAQIAVCAATLFTLVWACL). Residues 84 to 88 (AVRRR) lie on the Cytoplasmic side of the membrane. A helical membrane pass occupies residues 89-109 (GLVFALFFFDLLTTLTAISAF). The Extracellular segment spans residues 110–141 (SAAFAEGYVGKYGNKQAGWLPICGYVHGYCSR). A helical transmembrane segment spans residues 142–162 (VTISLAMSFASFILLFILTVL). Over 163-170 (TASAARHY) the chain is Cytoplasmic.

The protein belongs to the Casparian strip membrane proteins (CASP) family. Homodimer and heterodimers. In terms of tissue distribution, in flowers, expressed in the anther wall.

It is found in the cell membrane. The polypeptide is CASP-like protein 1F1 (Arabidopsis thaliana (Mouse-ear cress)).